We begin with the raw amino-acid sequence, 196 residues long: UPF0316 protein LBL_2483 (196 aa).

Transmembrane regions (helical) follow at residues 12-32 (YCVL…IGTI), 44-64 (IAAS…TQVI), and 70-90 (ALCY…GMIL).

Belongs to the UPF0316 family.

Its subcellular location is the cell membrane. The polypeptide is UPF0316 protein LBL_2483 (Leptospira borgpetersenii serovar Hardjo-bovis (strain L550)).